We begin with the raw amino-acid sequence, 384 residues long: Glycerol 3-phosphate oxidase (384 aa).

An N-terminal signal peptide occupies residues 1 to 15 (METRDVLIVGGGVIG). Isoleucine 14 contacts FAD. The N-palmitoyl cysteine moiety is linked to residue cysteine 16. Cysteine 16 carries S-diacylglycerol cysteine lipidation. FAD contacts are provided by residues glutamate 33, 42–43 (TS), and 47–49 (SGV). Sn-glycerol 3-phosphate contacts are provided by serine 47 and histidine 51. The Proton acceptor role is filled by histidine 51. Valine 177 is an FAD binding site. Sn-glycerol 3-phosphate is bound by residues lysine 258 and arginine 320. Residue 346-347 (MK) participates in FAD binding. Serine 348 is a binding site for sn-glycerol 3-phosphate. Position 352 (threonine 352) interacts with FAD.

In terms of assembly, monomer. The cofactor is FAD.

It localises to the cytoplasm. The protein resides in the cell membrane. It carries out the reaction sn-glycerol 3-phosphate + O2 = dihydroxyacetone phosphate + H2O2. The protein operates within polyol metabolism; glycerol degradation via glycerol kinase pathway; glycerone phosphate from sn-glycerol 3-phosphate (aerobic route): step 1/1. In terms of biological role, catalyzes the oxidation of glycerol 3-phosphate to dihydroxyacetone phosphate (DHAP), with a reduction of O2 to H2O2. The formation of hydrogen peroxide by this enzyme is crucial for cytotoxic effects of M.pneumoniae on host cells. Is involved in the metabolism of glycerol and is essential for glycerol utilization; glycerol is one of the few carbon sources that can be utilized by M.pneumoniae for growth. To a lesser extent, is also able to use glyceraldehyde 3-phosphate (GAP), an intermediate in the glycolysis pathway, as a substrate (but the structure of the product has not been elucidated). Therefore, in the absence of glycerol, GAP may serve as a substrate in the GlpO reaction to supply H2O2 during mycoplasma infection. Does not show any dehydrogenase activity with NAD(+). The sequence is that of Glycerol 3-phosphate oxidase from Mycoplasma pneumoniae (strain ATCC 29342 / M129 / Subtype 1) (Mycoplasmoides pneumoniae).